Consider the following 513-residue polypeptide: uncharacterized protein (513 aa).

13 consecutive transmembrane segments (helical) span residues 3-23, 47-67, 71-91, 129-149, 153-173, 177-197, 233-253, 273-293, 320-340, 374-394, 395-415, 424-444, and 462-482; these read MTAF…TYFA, LAIA…GMIA, FDGF…LYIV, TFYM…LLGL, AAVL…GMIA, VQII…IIVF, ETLS…HILI, WIIG…AAFV, FLFA…VTGL, ASVA…SLNV, AFLV…LIVF, ASGA…LVSM, and LIPL…GAWL.

This sequence belongs to the sodium:solute symporter (SSF) (TC 2.A.21) family.

It localises to the cell membrane. This is an uncharacterized protein from Bacillus subtilis (strain 168).